A 332-amino-acid polypeptide reads, in one-letter code: Ribosomal RNA small subunit methyltransferase H (332 aa).

S-adenosyl-L-methionine is bound by residues 34 to 36 (GGH), Asp-59, Phe-86, Asp-112, and Gln-119.

This sequence belongs to the methyltransferase superfamily. RsmH family.

It localises to the cytoplasm. It carries out the reaction cytidine(1402) in 16S rRNA + S-adenosyl-L-methionine = N(4)-methylcytidine(1402) in 16S rRNA + S-adenosyl-L-homocysteine + H(+). Its function is as follows. Specifically methylates the N4 position of cytidine in position 1402 (C1402) of 16S rRNA. This chain is Ribosomal RNA small subunit methyltransferase H, found in Chlorobium phaeobacteroides (strain BS1).